A 798-amino-acid polypeptide reads, in one-letter code: Nuclear intron maturase 4, mitochondrial (798 aa).

The N-terminal 16 residues, 1 to 16, are a transit peptide targeting the mitochondrion; that stretch reads MFRKRNLVLDLLRRCY. The intron maturase type-2 stretch occupies residues 578 to 665; sequence VVAPTNAIGR…AAKYRIHENE (88 aa). Residues 729 to 778 form a THAP-type zinc finger; the sequence is CFVIGCSMAAPAVYTLHAMERQKFPGWKTGFSVCIPSSLNGRRIGLCKQH.

Belongs to the plant nuclear intron maturase (nMat) family.

It is found in the mitochondrion. It localises to the plastid. The protein resides in the chloroplast. Functionally, nuclear-encoded maturase required for splicing of group-II introns in mitochondria. Involved in NAD1 pre-mRNA processing and maturation of introns 1, 3 and 4. Necessary for mitochondrial biogenesis during early developmental stages. Essential for respiratory holocomplex I biogenesis in mitochondria. The sequence is that of Nuclear intron maturase 4, mitochondrial from Arabidopsis thaliana (Mouse-ear cress).